Here is a 371-residue protein sequence, read N- to C-terminus: Leucine-rich repeat-containing protein 58 (371 aa).

At S24 the chain carries Phosphoserine. LRR repeat units follow at residues 45 to 66 (ALLR…LGSG), 69 to 91 (HLQL…LALR), 92 to 113 (GLRT…PKGL), 121 to 143 (SLQV…LELR), 144 to 166 (ALQT…ENLQ), 167 to 189 (SLEC…GNLP), 190 to 211 (SLNY…LSQL), 213 to 234 (SLRS…ILNL), and 236 to 256 (HLEE…RDLT). Low complexity predominate over residues 340–351 (SSASHSSTSQSE). The segment at 340–361 (SSASHSSTSQSESDSEDEASVA) is disordered.

The sequence is that of Leucine-rich repeat-containing protein 58 (LRRC58) from Homo sapiens (Human).